A 749-amino-acid polypeptide reads, in one-letter code: Protein phosphatase 1E (749 aa).

Positions 21–128 (EFRGPCGGGE…PPLPPLPRPL (108 aa)) are disordered. Repeat copies occupy residues 31–32 (PE), 33–34 (PE), and 35–36 (PE). A 7 X 2 AA tandem repeats of P-E region spans residues 31-44 (PEPEPESEPEPEPE). The span at 31 to 45 (PEPEPESEPEPEPEA) shows a compositional bias: acidic residues. Residues 37-38 (SE) form a 4; approximate repeat. A run of 3 repeats spans residues 39 to 40 (PE), 41 to 42 (PE), and 43 to 44 (PE). Positions 46–55 (ELVAAEAAEA) are enriched in low complexity. Residues 69–102 (ATEEGEQDQDPEPEDEAVEEETATEGEEEEEEEA) are compositionally biased toward acidic residues. The segment covering 110–126 (VPPPPQPQLPPLPPLPR) has biased composition (pro residues). The PPM-type phosphatase domain occupies 224–485 (QIYYETSIHA…DNITVIVVFL (262 aa)). The Mn(2+) site is built by Asp-270, Gly-271, Asp-432, and Asp-476. Residues 495–537 (SEESEWTENSFQGGQEDGGDDKETHGECKRPWPQHQCSAPADL) form a disordered region. The span at 515–524 (DKETHGECKR) shows a compositional bias: basic and acidic residues. Ser-532 and Ser-545 each carry phosphoserine. Residues 608–627 (VKSSLPERSGAGEPRVSFNL) are disordered.

This sequence belongs to the PP2C family. In terms of assembly, heterotrimer. Interacts with PAX1 and ARHGEF6 (or ARHGEF7). The cofactor is Mg(2+). It depends on Mn(2+) as a cofactor.

The protein resides in the nucleus. It localises to the cytoplasm. It catalyses the reaction O-phospho-L-seryl-[protein] + H2O = L-seryl-[protein] + phosphate. It carries out the reaction O-phospho-L-threonyl-[protein] + H2O = L-threonyl-[protein] + phosphate. Functionally, protein phosphatase that inactivates multifunctional CaM kinases such as CAMK4 and CAMK2. Dephosphorylates and inactivates PAK. May play a role in the inhibition of actin fiber stress breakdown and in morphological changes driven by TNK2/CDC42. Dephosphorylates PRKAA2. This chain is Protein phosphatase 1E (Ppm1e), found in Mus musculus (Mouse).